We begin with the raw amino-acid sequence, 233 residues long: Large ribosomal subunit protein uL1 (233 aa).

Belongs to the universal ribosomal protein uL1 family. Part of the 50S ribosomal subunit.

In terms of biological role, binds directly to 23S rRNA. The L1 stalk is quite mobile in the ribosome, and is involved in E site tRNA release. Functionally, protein L1 is also a translational repressor protein, it controls the translation of the L11 operon by binding to its mRNA. In Aeromonas hydrophila subsp. hydrophila (strain ATCC 7966 / DSM 30187 / BCRC 13018 / CCUG 14551 / JCM 1027 / KCTC 2358 / NCIMB 9240 / NCTC 8049), this protein is Large ribosomal subunit protein uL1.